The primary structure comprises 458 residues: Transcription factor Atf1 (458 aa).

The 64-residue stretch at 347 to 410 (EEKRRNFLER…VNLKTLLLAH (64 aa)) folds into the bZIP domain. Residues 349–378 (KRRNFLERNRVAALKCRQRKKQWLANLQNK) form a basic motif region. Residues 389–403 (LTATVTQLREEIVNL) form a leucine-zipper region.

This sequence belongs to the bZIP family.

Its subcellular location is the nucleus. Functionally, transcription factor that positively regulates vegetative growth, reproduction, and osmotic stress response. This chain is Transcription factor Atf1, found in Penicillium expansum (Blue mold rot fungus).